Reading from the N-terminus, the 329-residue chain is Prostaglandin reductase 1 (329 aa).

Position 18 is a phosphothreonine (T18). A Phosphoserine modification is found at S20. NADP(+) contacts are provided by residues 152–155 (GAVG), K178, Y193, N217, 239–245 (CGAISVY), 270–272 (FVV), and N321. At K178 the chain carries N6-(2-hydroxyisobutyryl)lysine; alternate. N6-acetyllysine; alternate is present on K178.

It belongs to the NADP-dependent oxidoreductase L4BD family. As to quaternary structure, monomer or homodimer.

It is found in the cytoplasm. It catalyses the reaction 13,14-dihydro-15-oxo-prostaglandin E1 + NADP(+) = 15-oxoprostaglandin E1 + NADPH + H(+). The enzyme catalyses 13,14-dihydro-15-oxo-prostaglandin E2 + NADP(+) = 15-oxoprostaglandin E2 + NADPH + H(+). The catalysed reaction is 13,14-dihydro-15-oxo-prostaglandin F1alpha + NADP(+) = 15-oxoprostaglandin F1alpha + NADPH + H(+). It carries out the reaction 13,14-dihydro-15-oxo-PGF2alpha + NADP(+) = 15-oxoprostaglandin F2alpha + NADPH + H(+). It catalyses the reaction leukotriene B4 + NADP(+) = 12-oxo-leukotriene B4 + NADPH + H(+). The enzyme catalyses 20-hydroxy-leukotriene B4 + NADP(+) = 12-oxo-20-hydroxy-leukotriene B4 + NADPH + H(+). The catalysed reaction is 6-trans-leukotriene B4 + NADP(+) = 12-oxo-(5S)-hydroxy-(6E,8E,10E,14Z)-eicosatetraenoate + NADPH + H(+). It carries out the reaction (5S,12S)-dihydroxy-(6E,10E,12E,14Z)-eicosatetraenoate + NADP(+) = 12-oxo-(5S)-hydroxy-(6E,8E,10E,14Z)-eicosatetraenoate + NADPH + H(+). It catalyses the reaction an n-alkanal + NADP(+) = an alk-2-enal + NADPH + H(+). The enzyme catalyses hexanal + NADP(+) = (E)-hex-2-enal + NADPH + H(+). The catalysed reaction is octanal + NADP(+) = (2E)-octenal + NADPH + H(+). It carries out the reaction decanal + NADP(+) = (2E)-decenal + NADPH + H(+). It catalyses the reaction dodecanal + NADP(+) = (2E)-dodecenal + NADPH + H(+). The enzyme catalyses 4-hydroxynonanal + NADP(+) = (E)-4-hydroxynon-2-enal + NADPH + H(+). The catalysed reaction is pentan-2-one + NADP(+) = (E)-pent-3-en-2-one + NADPH + H(+). It carries out the reaction nonan-2-one + NADP(+) = (3E)-nonen-2-one + NADPH + H(+). NAD(P)H-dependent oxidoreductase involved in metabolic inactivation of pro- and anti-inflammatory eicosanoids: prostaglandins (PG), leukotrienes (LT) and lipoxins (LX). Catalyzes with high efficiency the reduction of the 13,14 double bond of 15-oxoPGs, including 15-oxo-PGE1, 15-oxo-PGE2, 15-oxo-PGF1-alpha and 15-oxo-PGF2-alpha. Catalyzes with lower efficiency the oxidation of the hydroxyl group at C12 of LTB4 and its derivatives, converting them into biologically less active 12-oxo-LTB4 metabolites. Reduces 15-oxo-LXA4 to 13,14 dihydro-15-oxo-LXA4, enhancing neutrophil recruitment at the inflammatory site. Plays a role in metabolic detoxification of alkenals and ketones. Reduces alpha,beta-unsaturated alkenals and ketones, particularly those with medium-chain length, showing highest affinity toward (2E)-decenal and (3E)-3-nonen-2-one. May inactivate 4-hydroxy-2-nonenal, a cytotoxic lipid constituent of oxidized low-density lipoprotein particles. This is Prostaglandin reductase 1 (PTGR1) from Bos taurus (Bovine).